The following is a 456-amino-acid chain: Exodeoxyribonuclease 7 large subunit (456 aa).

It belongs to the XseA family. Heterooligomer composed of large and small subunits.

The protein resides in the cytoplasm. It carries out the reaction Exonucleolytic cleavage in either 5'- to 3'- or 3'- to 5'-direction to yield nucleoside 5'-phosphates.. In terms of biological role, bidirectionally degrades single-stranded DNA into large acid-insoluble oligonucleotides, which are then degraded further into small acid-soluble oligonucleotides. This chain is Exodeoxyribonuclease 7 large subunit, found in Shigella boydii serotype 4 (strain Sb227).